A 222-amino-acid chain; its full sequence is Protein-L-isoaspartate O-methyltransferase (222 aa).

Ser72 is a catalytic residue.

Belongs to the methyltransferase superfamily. L-isoaspartyl/D-aspartyl protein methyltransferase family.

Its subcellular location is the cytoplasm. It carries out the reaction [protein]-L-isoaspartate + S-adenosyl-L-methionine = [protein]-L-isoaspartate alpha-methyl ester + S-adenosyl-L-homocysteine. Functionally, catalyzes the methyl esterification of L-isoaspartyl residues in peptides and proteins that result from spontaneous decomposition of normal L-aspartyl and L-asparaginyl residues. It plays a role in the repair and/or degradation of damaged proteins. The sequence is that of Protein-L-isoaspartate O-methyltransferase from Picosynechococcus sp. (strain ATCC 27264 / PCC 7002 / PR-6) (Agmenellum quadruplicatum).